The chain runs to 389 residues: E3 ubiquitin-protein ligase E3D (389 aa).

At Ala2 the chain carries N-acetylalanine. The short motif at 129-159 (PLPGDNWGALVDEWCCHPDPFANKPLHPREN) is the BRAT1-like motif element. Residue Cys144 coordinates Zn(2+). The tract at residues 235–257 (LPSERNFPIIPRSQFVQSVLAQC) is interaction with UBE2C. The HECT-like stretch occupies residues 353 to 389 (LPSTTCLELLLILSKSNATLPPSLRCMNSFQVAFLKM).

Interacts with UBE2C/UbcH10 (E2 ubiquitin-conjugating enzyme). In vitro, interacts with cyclin-B. In terms of processing, ubiquitinated by UBCH10 (E2 ubiquitin-conjugating enzyme).

The protein resides in the cytoplasm. It catalyses the reaction S-ubiquitinyl-[E2 ubiquitin-conjugating enzyme]-L-cysteine + [acceptor protein]-L-lysine = [E2 ubiquitin-conjugating enzyme]-L-cysteine + N(6)-ubiquitinyl-[acceptor protein]-L-lysine.. It participates in protein modification; protein ubiquitination. Its function is as follows. E3 ubiquitin-protein ligase which accepts ubiquitin from specific E2 ubiquitin-conjugating enzymes, and transfers it to substrates, generally promoting their degradation by the proteasome. Independently of its E3 ubiquitin-protein ligase activity, acts as an inhibitor of CPSF3 endonuclease activity by blocking CPSF3 active site. The protein is E3 ubiquitin-protein ligase E3D (UBE3D) of Bos taurus (Bovine).